The primary structure comprises 88 residues: Putative defensin-like protein 256 (88 aa).

The first 25 residues, 1–25 (MKSSIFFKLLLLVSLLVVIFRQSYA), serve as a signal peptide directing secretion. Intrachain disulfides connect cysteine 30/cysteine 46, cysteine 36/cysteine 53, and cysteine 40/cysteine 55.

Belongs to the DEFL family.

The protein resides in the secreted. In Arabidopsis thaliana (Mouse-ear cress), this protein is Putative defensin-like protein 256.